An 86-amino-acid chain; its full sequence is UPF0473 protein Clos_1662 (86 aa).

The protein belongs to the UPF0473 family.

The sequence is that of UPF0473 protein Clos_1662 from Alkaliphilus oremlandii (strain OhILAs) (Clostridium oremlandii (strain OhILAs)).